Here is a 630-residue protein sequence, read N- to C-terminus: Probable potassium transport system protein Kup 1 (630 aa).

Transmembrane regions (helical) follow at residues 15–35 (FAAL…TSPL), 59–79 (LSLI…TFIM), 109–129 (WIMI…MVTP), 145–165 (PALK…LFFV), 173–193 (VGAF…LLGV), 223–243 (LVAM…YADM), 255–275 (WFAF…ALIL), 297–317 (LVGL…SGAF), 345–365 (IYLP…VLGF), 374–394 (AYGI…TVVV), 405–425 (AGLL…ANIL), and 427–447 (IPDG…LMTT).

This sequence belongs to the HAK/KUP transporter (TC 2.A.72) family.

It is found in the cell inner membrane. The enzyme catalyses K(+)(in) + H(+)(in) = K(+)(out) + H(+)(out). Transport of potassium into the cell. Likely operates as a K(+):H(+) symporter. The polypeptide is Probable potassium transport system protein Kup 1 (Dechloromonas aromatica (strain RCB)).